The following is a 206-amino-acid chain: GTP cyclohydrolase 1 (206 aa).

A compositionally biased stretch (basic and acidic residues) spans 1–17 (MDAVTPKKDIPRPDSVR). The disordered stretch occupies residues 1–23 (MDAVTPKKDIPRPDSVRRPSQQE). Zn(2+)-binding residues include C95, H98, and C166.

The protein belongs to the GTP cyclohydrolase I family. As to quaternary structure, toroid-shaped homodecamer, composed of two pentamers of five dimers.

It carries out the reaction GTP + H2O = 7,8-dihydroneopterin 3'-triphosphate + formate + H(+). It participates in cofactor biosynthesis; 7,8-dihydroneopterin triphosphate biosynthesis; 7,8-dihydroneopterin triphosphate from GTP: step 1/1. The protein is GTP cyclohydrolase 1 of Hyphomonas neptunium (strain ATCC 15444).